The sequence spans 463 residues: tRNA dimethylallyltransferase 9 (463 aa).

ATP is bound at residue 57–64 (GPTGAGKS). 59–64 (TGAGKS) lines the substrate pocket. The tract at residues 82–85 (DSVQ) is interaction with substrate tRNA.

Belongs to the IPP transferase family. Requires Mg(2+) as cofactor. Expressed ubiquitously, with highest expression in proliferating tissues.

The protein resides in the cytoplasm. The enzyme catalyses adenosine(37) in tRNA + dimethylallyl diphosphate = N(6)-dimethylallyladenosine(37) in tRNA + diphosphate. Its function is as follows. Catalyzes the transfer of a dimethylallyl group onto the adenine at position 37 in tRNAs that read codons beginning with uridine, leading to the formation of N6-(dimethylallyl)adenosine (i(6)A). Involved in the cis-type cytokinin biosynthesis. In Arabidopsis thaliana (Mouse-ear cress), this protein is tRNA dimethylallyltransferase 9 (IPT9).